The following is a 182-amino-acid chain: Large ribosomal subunit protein uL5c (182 aa).

The protein belongs to the universal ribosomal protein uL5 family. In terms of assembly, part of the 50S ribosomal subunit; contacts the 5S rRNA.

It is found in the plastid. The protein localises to the chloroplast. Functionally, binds 5S rRNA, forms part of the central protuberance of the 50S subunit. The polypeptide is Large ribosomal subunit protein uL5c (rpl5) (Emiliania huxleyi (Coccolithophore)).